The chain runs to 166 residues: Bud site selection protein 20 (166 aa).

The Nuclear localization signal motif lies at 7–16; it reads KRYKTKRRTR. The tract at residues 17–31 is nuclear export signal-like (NES-like); sequence DLDLIYNDLSTKESV. The C2H2-type zinc-finger motif lies at 49-73; that stretch reads HYCIHCAKYMETAIALKTHLKGKVH.

It belongs to the ZNF593/BUD20 C2H2-type zinc-finger protein family. Associates with pre-60S ribosomal particles; released from the pre-60S particle very early in the cytoplasm.

The protein resides in the nucleus. Its subcellular location is the cytoplasm. In terms of biological role, involved in pre-60S ribosomal particles maturation by promoting the nuclear export of the 60S ribosome. Involved in positioning the proximal bud pole signal. This Saccharomyces cerevisiae (strain ATCC 204508 / S288c) (Baker's yeast) protein is Bud site selection protein 20.